Reading from the N-terminus, the 245-residue chain is MASFTIYPAIDMRGGKCVRLLQGDYNKETVYGDSPVAMAEQFAAQGAEWIHMVDLDGAKEGRRVNDRFVIEAANRLSVNVQVGGGIRTEEDVAYYLERGVARVILGSAAISNPTFVKKMLQTYGRRIVIGIDARDGFVATEGWLETSNVKAEELGQMLAEAGAETFIFTDIATDGTLSGPNITAAVRLAEATGKEVIASGGVRSLDDLRALREYAEQGIGGAIVGKALYTNQFTLAEALKAVNER.

Asp11 serves as the catalytic Proton acceptor. Asp132 (proton donor) is an active-site residue.

This sequence belongs to the HisA/HisF family.

It localises to the cytoplasm. It carries out the reaction 1-(5-phospho-beta-D-ribosyl)-5-[(5-phospho-beta-D-ribosylamino)methylideneamino]imidazole-4-carboxamide = 5-[(5-phospho-1-deoxy-D-ribulos-1-ylimino)methylamino]-1-(5-phospho-beta-D-ribosyl)imidazole-4-carboxamide. The protein operates within amino-acid biosynthesis; L-histidine biosynthesis; L-histidine from 5-phospho-alpha-D-ribose 1-diphosphate: step 4/9. The protein is 1-(5-phosphoribosyl)-5-[(5-phosphoribosylamino)methylideneamino] imidazole-4-carboxamide isomerase of Geobacillus thermodenitrificans (strain NG80-2).